A 216-amino-acid polypeptide reads, in one-letter code: Germin-like protein 1-1 (216 aa).

The N-terminal stretch at 1–24 (MARVQLWVAAACAVVLALAAPSLA) is a signal peptide. C34 and C49 form a disulfide bridge. N-linked (GlcNAc...) asparagine glycosylation is found at N52 and N76. Residues 61 to 209 (AGLKNPGNTN…AFRVDVPQVD (149 aa)) enclose the Cupin type-1 domain. Mn(2+) contacts are provided by H109, H111, E116, and H155.

This sequence belongs to the germin family. As to quaternary structure, oligomer (believed to be a pentamer but probably hexamer).

The protein localises to the secreted. It localises to the extracellular space. The protein resides in the apoplast. May play a role in plant defense. Probably has no oxalate oxidase activity even if the active site is conserved. This is Germin-like protein 1-1 (GER4) from Oryza sativa subsp. japonica (Rice).